Here is a 247-residue protein sequence, read N- to C-terminus: Uridylate kinase (247 aa).

Residue 16 to 19 (KLSG) coordinates ATP. Position 58 (G58) interacts with UMP. ATP contacts are provided by G59 and R63. Residues D78 and 139 to 146 (TGNPFFTT) each bind UMP. ATP is bound by residues T166, Y172, and D175.

The protein belongs to the UMP kinase family. Homohexamer.

The protein resides in the cytoplasm. The catalysed reaction is UMP + ATP = UDP + ADP. Its pathway is pyrimidine metabolism; CTP biosynthesis via de novo pathway; UDP from UMP (UMPK route): step 1/1. Inhibited by UTP. Functionally, catalyzes the reversible phosphorylation of UMP to UDP. This Xylella fastidiosa (strain 9a5c) protein is Uridylate kinase.